Reading from the N-terminus, the 139-residue chain is Actin-depolymerizing factor 7 (139 aa).

Residues 7–139 (GMAVDDECKL…GLDVIRGRAN (133 aa)) form the ADF-H domain.

The protein belongs to the actin-binding proteins ADF family.

Its function is as follows. Actin-depolymerizing protein. Severs actin filaments (F-actin) and binds to actin monomers. The polypeptide is Actin-depolymerizing factor 7 (ADF7) (Oryza sativa subsp. japonica (Rice)).